We begin with the raw amino-acid sequence, 307 residues long: Methionyl-tRNA formyltransferase (307 aa).

109 to 112 (SLLP) contacts (6S)-5,6,7,8-tetrahydrofolate.

Belongs to the Fmt family.

The enzyme catalyses L-methionyl-tRNA(fMet) + (6R)-10-formyltetrahydrofolate = N-formyl-L-methionyl-tRNA(fMet) + (6S)-5,6,7,8-tetrahydrofolate + H(+). Its function is as follows. Attaches a formyl group to the free amino group of methionyl-tRNA(fMet). The formyl group appears to play a dual role in the initiator identity of N-formylmethionyl-tRNA by promoting its recognition by IF2 and preventing the misappropriation of this tRNA by the elongation apparatus. The protein is Methionyl-tRNA formyltransferase of Mycobacteroides abscessus (strain ATCC 19977 / DSM 44196 / CCUG 20993 / CIP 104536 / JCM 13569 / NCTC 13031 / TMC 1543 / L948) (Mycobacterium abscessus).